Consider the following 227-residue polypeptide: Sperm-associated antigen 7 (227 aa).

The disordered stretch occupies residues 1 to 45 (MADLLGSILSSMEKPPSLGDQESRRKAREQAARLKKLQEQDKQQK). A2 is subject to N-acetylalanine. Basic and acidic residues predominate over residues 21–45 (QESRRKAREQAARLKKLQEQDKQQK). The short motif at 35 to 51 (KKLQEQDKQQKVEFRKR) is the Nuclear localization signal element. The region spanning 46–109 (VEFRKRMEKE…DCRYVMIFKK (64 aa)) is the R3H domain. Residue S114 is modified to Phosphoserine. The segment at 118-161 (LDSYRHGEEWDPQKAEEKRKLKELAQKQEEEAAQQGPAVVSPAS) is disordered. Basic and acidic residues predominate over residues 119-147 (DSYRHGEEWDPQKAEEKRKLKELAQKQEE). The short motif at 122 to 139 (RHGEEWDPQKAEEKRKLK) is the Nuclear localization signal element. 2 positions are modified to phosphoserine: S158 and S202.

Its subcellular location is the nucleus. The chain is Sperm-associated antigen 7 (Spag7) from Mus musculus (Mouse).